Reading from the N-terminus, the 253-residue chain is Imidazole glycerol phosphate synthase subunit HisF (253 aa).

Active-site residues include Asp11 and Asp130.

Belongs to the HisA/HisF family. In terms of assembly, heterodimer of HisH and HisF.

Its subcellular location is the cytoplasm. The catalysed reaction is 5-[(5-phospho-1-deoxy-D-ribulos-1-ylimino)methylamino]-1-(5-phospho-beta-D-ribosyl)imidazole-4-carboxamide + L-glutamine = D-erythro-1-(imidazol-4-yl)glycerol 3-phosphate + 5-amino-1-(5-phospho-beta-D-ribosyl)imidazole-4-carboxamide + L-glutamate + H(+). Its pathway is amino-acid biosynthesis; L-histidine biosynthesis; L-histidine from 5-phospho-alpha-D-ribose 1-diphosphate: step 5/9. In terms of biological role, IGPS catalyzes the conversion of PRFAR and glutamine to IGP, AICAR and glutamate. The HisF subunit catalyzes the cyclization activity that produces IGP and AICAR from PRFAR using the ammonia provided by the HisH subunit. This Ruminiclostridium cellulolyticum (strain ATCC 35319 / DSM 5812 / JCM 6584 / H10) (Clostridium cellulolyticum) protein is Imidazole glycerol phosphate synthase subunit HisF.